The following is a 110-amino-acid chain: ATP synthase subunit c (110 aa).

Transmembrane regions (helical) follow at residues 4 to 24 (FFVI…VFAA), 37 to 57 (ATAG…AGMG), and 81 to 101 (FIVG…FVLI).

The protein belongs to the ATPase C chain family. F-type ATPases have 2 components, F(1) - the catalytic core - and F(0) - the membrane proton channel. F(1) has five subunits: alpha(3), beta(3), gamma(1), delta(1), epsilon(1). F(0) has three main subunits: a(1), b(2) and c(10-14). The alpha and beta chains form an alternating ring which encloses part of the gamma chain. F(1) is attached to F(0) by a central stalk formed by the gamma and epsilon chains, while a peripheral stalk is formed by the delta and b chains.

The protein localises to the cell inner membrane. Functionally, f(1)F(0) ATP synthase produces ATP from ADP in the presence of a proton or sodium gradient. F-type ATPases consist of two structural domains, F(1) containing the extramembraneous catalytic core and F(0) containing the membrane proton channel, linked together by a central stalk and a peripheral stalk. During catalysis, ATP synthesis in the catalytic domain of F(1) is coupled via a rotary mechanism of the central stalk subunits to proton translocation. Key component of the F(0) channel; it plays a direct role in translocation across the membrane. A homomeric c-ring of between 10-14 subunits forms the central stalk rotor element with the F(1) delta and epsilon subunits. The protein is ATP synthase subunit c of Thermodesulfovibrio yellowstonii (strain ATCC 51303 / DSM 11347 / YP87).